A 376-amino-acid chain; its full sequence is Eugenol O-methyltransferase (376 aa).

Positions 219, 242, 263, and 276 each coordinate S-adenosyl-L-methionine. His-280 acts as the Proton acceptor in catalysis.

The protein belongs to the class I-like SAM-binding methyltransferase superfamily. Cation-independent O-methyltransferase family. COMT subfamily. As to quaternary structure, homodimer. In terms of tissue distribution, expressed predominantly in root hairs.

It catalyses the reaction (E)-isoeugenol + S-adenosyl-L-methionine = (E)-isomethyleugenol + S-adenosyl-L-homocysteine + H(+). Functionally, O-methyltransferase. Substrate preference is eugenol &gt;&gt; orcinol monomethyl ether &gt; resorcinol monomethyl ether. This Sorghum bicolor (Sorghum) protein is Eugenol O-methyltransferase (EOMT).